Consider the following 518-residue polypeptide: Putative cytochrome P450 CYP13A6 (518 aa).

Cys463 contacts heme.

This sequence belongs to the cytochrome P450 family. Heme serves as cofactor.

In terms of biological role, cytochromes P450 are a group of heme-thiolate monooxygenases. They oxidize a variety of structurally unrelated compounds, including steroids, fatty acids, and xenobiotics. This Caenorhabditis elegans protein is Putative cytochrome P450 CYP13A6 (cyp-13A6).